Reading from the N-terminus, the 267-residue chain is Ribosomal RNA small subunit methyltransferase A (267 aa).

S-adenosyl-L-methionine-binding residues include histidine 13, leucine 15, glycine 40, glutamate 61, aspartate 85, and asparagine 105.

The protein belongs to the class I-like SAM-binding methyltransferase superfamily. rRNA adenine N(6)-methyltransferase family. RsmA subfamily.

Its subcellular location is the cytoplasm. It catalyses the reaction adenosine(1518)/adenosine(1519) in 16S rRNA + 4 S-adenosyl-L-methionine = N(6)-dimethyladenosine(1518)/N(6)-dimethyladenosine(1519) in 16S rRNA + 4 S-adenosyl-L-homocysteine + 4 H(+). Functionally, specifically dimethylates two adjacent adenosines (A1518 and A1519) in the loop of a conserved hairpin near the 3'-end of 16S rRNA in the 30S particle. May play a critical role in biogenesis of 30S subunits. This chain is Ribosomal RNA small subunit methyltransferase A, found in Bacteroides thetaiotaomicron (strain ATCC 29148 / DSM 2079 / JCM 5827 / CCUG 10774 / NCTC 10582 / VPI-5482 / E50).